The chain runs to 180 residues: D-lyxose ketol-isomerase (180 aa).

Lys-62 contacts D-fructose. Residues His-75 and His-77 each coordinate Mn(2+). Lys-86 contributes to the D-fructose binding site. Mn(2+)-binding residues include Glu-88 and His-143. Residues Glu-156, Asp-166, and Arg-175 each contribute to the D-fructose site.

It belongs to the D-lyxose ketol-isomerase family. As to quaternary structure, homodimer; disulfide-linked. Stabilized by a disulfide bond between the two monomers of the dimeric enzyme and increased hydrophobicity at the dimer interface. Mn(2+) serves as cofactor.

The enzyme catalyses D-lyxose = D-xylulose. Functionally, sugar isomerase that catalyzes the reversible isomerization of D-lyxose to D-xylulose. Is highly specific for the substrate D-lyxose, showing less than 2% activity towards mannose and other substrates reported for lyxose isomerases. This Thermofilum sp. (strain ex4484_79) protein is D-lyxose ketol-isomerase.